The following is a 746-amino-acid chain: Methyl-CpG-binding domain-containing protein 13 (746 aa).

2 short sequence motifs (nuclear localization signal) span residues 13 to 20 (ERKVEIRV) and 44 to 51 (IKKLEITN). Positions 29–104 (VIVEKSAAQG…KESDIEDDDS (76 aa)) constitute an MBD domain. Disordered regions lie at residues 131–157 (IDDV…MTSD), 169–283 (LGKK…PTPE), 295–328 (PLDD…KTRT), 348–479 (TKVQ…LKSP), 518–562 (TAAG…SGSA), and 696–746 (EPDT…FSKD). The segment covering 169–180 (LGKKEEVKDPIE) has biased composition (basic and acidic residues). The span at 190–199 (RSQTKASTTE) shows a compositional bias: polar residues. Basic and acidic residues predominate over residues 244 to 260 (SSEKRITRSKVEEKKNE). The short motif at 256-263 (EKKNELSN) is the Nuclear localization signal element. The span at 427–451 (VAQSCNEQSSQKPHAAAATSNNRVS) shows a compositional bias: polar residues. A compositionally biased stretch (basic residues) spans 465–476 (VGRKPSKDKKTL). Composition is skewed to polar residues over residues 529–546 (PKAN…SPLR) and 702–730 (KSQG…TNKT). The segment covering 732 to 746 (GKPDDLRFTQSFSKD) has biased composition (basic and acidic residues).

The protein localises to the nucleus. Functionally, probable transcriptional regulator. The polypeptide is Methyl-CpG-binding domain-containing protein 13 (MBD13) (Arabidopsis thaliana (Mouse-ear cress)).